Here is a 354-residue protein sequence, read N- to C-terminus: CX3C chemokine receptor 1 (354 aa).

Residues 1–32 (MSTSFPELDLENFEYDDSAEACYLGDIVAFGT) lie on the Extracellular side of the membrane. A helical membrane pass occupies residues 33-60 (IFLSVFYALVFTFGLVGNLLVVLALTNS). The Cytoplasmic segment spans residues 61 to 70 (RKPKSITDIY). Residues 71 to 91 (LLNLALSDLLFVATLPFWTHY) traverse the membrane as a helical segment. The Extracellular segment spans residues 92–104 (LISHEGLHNAMCK). Residues C103 and C176 are joined by a disulfide bond. A helical transmembrane segment spans residues 105-126 (LTTAFFFIGFFGGIFFITVISI). The Cytoplasmic portion of the chain corresponds to 127-143 (DRYLAIVLAANSMNNRT). The helical transmembrane segment at 144–168 (VQHGVTISLGVWAAAILVASPQFMF) threads the bilayer. Topologically, residues 169 to 196 (TKRKDNECLGDYPEVLQEMWPVLRNSEV) are extracellular. The chain crosses the membrane as a helical span at residues 197-216 (NILGFALPLLIMSFCYFRII). Over 217–232 (QTLFSCKNRKKARAVR) the chain is Cytoplasmic. A helical transmembrane segment spans residues 233–257 (LILLVVFAFFLFWTPYNIMIFLETL). Topologically, residues 258–274 (KFYNFFPSCDMKRDLRL) are extracellular. A helical transmembrane segment spans residues 275–298 (ALSVTETVAFSHCCLNPFIYAFAG). The Cytoplasmic segment spans residues 299–354 (EKFRRYLGHLYRKCLAVLCGHPVHTGFSPESQRSRQDSILSSFTHYTSEGDGSLLL). Phosphothreonine is present on T345.

The protein belongs to the G-protein coupled receptor 1 family. Found in a ternary complex with CX3CL1 and ITGAV:ITGB3 or ITGA4:ITGB1. Post-translationally, this protein is not N-glycosylated which is unusual for G-protein-coupled receptors. As to expression, specifically expressed in subsets of leukocytes: expressed in monocytes, subsets of T-cells and natural killer (NK) cells in the circulation, dendritic cells, as well as in microglia in the central nervous system (CNS). Expression level subdivides blood monocytes into two major functional subsets; CD14(+)CD16(-)-CX3CR1(low) inflammatory monocytes and CD14(low)CD16(+)CX3CR1(high) homeostatic monocytes. Expressed in myeloid-derived mucosal dendritic cells, which populate the entire lamina propria of the small intestine.

The protein resides in the cell membrane. Its function is as follows. Receptor for the C-X3-C chemokine fractalkine (CX3CL1) present on many early leukocyte cells; CX3CR1-CX3CL1 signaling exerts distinct functions in different tissue compartments, such as immune response, inflammation, cell adhesion and chemotaxis. CX3CR1-CX3CL1 signaling mediates cell migratory functions. Responsible for the recruitment of natural killer (NK) cells to inflamed tissues. Acts as a regulator of inflammation process leading to atherogenesis by mediating macrophage and monocyte recruitment to inflamed atherosclerotic plaques, promoting cell survival. Involved in airway inflammation by promoting interleukin 2-producing T helper (Th2) cell survival in inflamed lung. Involved in the migration of circulating monocytes to non-inflamed tissues, where they differentiate into macrophages and dendritic cells. Acts as a negative regulator of angiogenesis, probably by promoting macrophage chemotaxis. Plays a key role in brain microglia by regulating inflammatory response in the central nervous system (CNS) and regulating synapse maturation. Required to restrain the microglial inflammatory response in the CNS and the resulting parenchymal damage in response to pathological stimuli. Involved in brain development by participating in synaptic pruning, a natural process during which brain microglia eliminates extra synapses during postnatal development. Synaptic pruning by microglia is required to promote the maturation of circuit connectivity during brain development. Acts as an important regulator of the gut microbiota by controlling immunity to intestinal bacteria and fungi. Expressed in lamina propria dendritic cells in the small intestine, which form transepithelial dendrites capable of taking up bacteria in order to provide defense against pathogenic bacteria. Required to initiate innate and adaptive immune responses against dissemination of commensal fungi (mycobiota) component of the gut: expressed in mononuclear phagocytes (MNPs) and acts by promoting induction of antifungal IgG antibodies response to confer protection against disseminated C.albicans or C.auris infection. Also acts as a receptor for C-C motif chemokine CCL26, inducing cell chemotaxis. This chain is CX3C chemokine receptor 1, found in Mus musculus (Mouse).